Consider the following 594-residue polypeptide: UvrABC system protein C (594 aa).

In terms of domain architecture, GIY-YIG spans 14–91 (DSPGCYLHKD…IQENMPKYNI (78 aa)). A UVR domain is found at 196-231 (DKIIDDLRSKMLEASNKQEFERAAEYRDLISGIATM).

The protein belongs to the UvrC family. In terms of assembly, interacts with UvrB in an incision complex.

The protein localises to the cytoplasm. The UvrABC repair system catalyzes the recognition and processing of DNA lesions. UvrC both incises the 5' and 3' sides of the lesion. The N-terminal half is responsible for the 3' incision and the C-terminal half is responsible for the 5' incision. The sequence is that of UvrABC system protein C from Streptococcus equi subsp. zooepidemicus (strain MGCS10565).